We begin with the raw amino-acid sequence, 61 residues long: Small ribosomal subunit protein uS14B (61 aa).

Zn(2+) contacts are provided by C24, C27, C40, and C43.

Belongs to the universal ribosomal protein uS14 family. Zinc-binding uS14 subfamily. In terms of assembly, part of the 30S ribosomal subunit. Contacts proteins S3 and S10. Requires Zn(2+) as cofactor.

Binds 16S rRNA, required for the assembly of 30S particles and may also be responsible for determining the conformation of the 16S rRNA at the A site. This chain is Small ribosomal subunit protein uS14B, found in Lactococcus lactis subsp. lactis (strain IL1403) (Streptococcus lactis).